The sequence spans 82 residues: Acyl carrier protein (82 aa).

A Carrier domain is found at S3–I77. An O-(pantetheine 4'-phosphoryl)serine modification is found at S37.

The protein belongs to the acyl carrier protein (ACP) family. 4'-phosphopantetheine is transferred from CoA to a specific serine of apo-ACP by AcpS. This modification is essential for activity because fatty acids are bound in thioester linkage to the sulfhydryl of the prosthetic group.

It is found in the plastid. It localises to the chloroplast. The protein operates within lipid metabolism; fatty acid biosynthesis. In terms of biological role, carrier of the growing fatty acid chain in fatty acid biosynthesis. The chain is Acyl carrier protein from Gracilaria tenuistipitata var. liui (Red alga).